The following is a 192-amino-acid chain: Probable GTP-binding protein EngB (192 aa).

In terms of domain architecture, EngB-type G spans 22-192 (GRPEIVFVGR…LLERLDLFSQ (171 aa)). Residues 30–37 (GRSNVGKS), 57–61 (GKTRL), 75–78 (DLPG), 142–145 (TKWD), and 172–174 (YSS) each bind GTP. Residues serine 37 and threonine 59 each contribute to the Mg(2+) site.

It belongs to the TRAFAC class TrmE-Era-EngA-EngB-Septin-like GTPase superfamily. EngB GTPase family. It depends on Mg(2+) as a cofactor.

Functionally, necessary for normal cell division and for the maintenance of normal septation. The sequence is that of Probable GTP-binding protein EngB from Chlorobaculum parvum (strain DSM 263 / NCIMB 8327) (Chlorobium vibrioforme subsp. thiosulfatophilum).